A 364-amino-acid polypeptide reads, in one-letter code: tRNA 2-selenouridine synthase (364 aa).

The region spanning 12–135 (FLNDRPMMDT…MRTFLLDTTE (124 aa)) is the Rhodanese domain. Cys95 (S-selanylcysteine intermediate) is an active-site residue.

It belongs to the SelU family. Monomer.

It catalyses the reaction 5-methylaminomethyl-2-thiouridine(34) in tRNA + selenophosphate + (2E)-geranyl diphosphate + H2O + H(+) = 5-methylaminomethyl-2-selenouridine(34) in tRNA + (2E)-thiogeraniol + phosphate + diphosphate. It carries out the reaction 5-methylaminomethyl-2-thiouridine(34) in tRNA + (2E)-geranyl diphosphate = 5-methylaminomethyl-S-(2E)-geranyl-thiouridine(34) in tRNA + diphosphate. The enzyme catalyses 5-methylaminomethyl-S-(2E)-geranyl-thiouridine(34) in tRNA + selenophosphate + H(+) = 5-methylaminomethyl-2-(Se-phospho)selenouridine(34) in tRNA + (2E)-thiogeraniol. The catalysed reaction is 5-methylaminomethyl-2-(Se-phospho)selenouridine(34) in tRNA + H2O = 5-methylaminomethyl-2-selenouridine(34) in tRNA + phosphate. In terms of biological role, involved in the post-transcriptional modification of the uridine at the wobble position (U34) of tRNA(Lys), tRNA(Glu) and tRNA(Gln). Catalyzes the conversion of 2-thiouridine (S2U-RNA) to 2-selenouridine (Se2U-RNA). Acts in a two-step process involving geranylation of 2-thiouridine (S2U) to S-geranyl-2-thiouridine (geS2U) and subsequent selenation of the latter derivative to 2-selenouridine (Se2U) in the tRNA chain. The protein is tRNA 2-selenouridine synthase of Pseudomonas fluorescens (strain ATCC BAA-477 / NRRL B-23932 / Pf-5).